The sequence spans 275 residues: Polyamine aminopropyltransferase (275 aa).

Positions 2 to 235 constitute a PABS domain; sequence ELWFTEKQTK…GLWTFTIGSK (234 aa). Glutamine 31 contributes to the S-methyl-5'-thioadenosine binding site. Spermidine contacts are provided by histidine 62 and aspartate 86. Residues glutamate 106 and 137-138 contribute to the S-methyl-5'-thioadenosine site; that span reads DG. The active-site Proton acceptor is the aspartate 155. 155–158 contacts spermidine; sequence DSTE. Proline 162 is an S-methyl-5'-thioadenosine binding site.

This sequence belongs to the spermidine/spermine synthase family. In terms of assembly, homodimer or homotetramer.

It is found in the cytoplasm. The catalysed reaction is S-adenosyl 3-(methylsulfanyl)propylamine + putrescine = S-methyl-5'-thioadenosine + spermidine + H(+). The protein operates within amine and polyamine biosynthesis; spermidine biosynthesis; spermidine from putrescine: step 1/1. In terms of biological role, catalyzes the irreversible transfer of a propylamine group from the amino donor S-adenosylmethioninamine (decarboxy-AdoMet) to putrescine (1,4-diaminobutane) to yield spermidine. This is Polyamine aminopropyltransferase from Bacillus cytotoxicus (strain DSM 22905 / CIP 110041 / 391-98 / NVH 391-98).